A 296-amino-acid chain; its full sequence is MVCKALITLCIFAAGLRVQGSPTPTLLPVSLTTKSTAPMATWTTSAQHTAMATTPVASATHNASVLRTTAASLTSQLPTHPREEAVTSPPLKREVNSTDSSPTGFSSNSSGIHLAPTPEEHSLGSPETSVPATGSQSPTLLFSQGPTSASTSPATSPSEPLSASVTSNHSSTVNNIQPTGAPMAPASPTEEHSSSHTPTSHVTEPVPKEKSPQDTEPGKVICESETTTPFLIMQEVENALSSGSIAAITVTVIAVVLLVFGAAAYLKIRHSSYGRLLDDHDYGSWGNYNNPLYDDS.

A signal peptide spans methionine 1–glycine 20. The Extracellular portion of the chain corresponds to serine 21–serine 244. N-linked (GlcNAc...) asparagine glycosylation is found at asparagine 62, asparagine 96, and asparagine 108. The disordered stretch occupies residues leucine 73 to valine 220. Residues histidine 80–asparagine 96 are compositionally biased toward basic and acidic residues. Low complexity predominate over residues serine 97–glycine 111. The segment covering serine 125 to glycine 145 has biased composition (polar residues). Low complexity-rich tracts occupy residues proline 146–asparagine 175 and serine 195–proline 205. A glycan (N-linked (GlcNAc...) asparagine) is linked at asparagine 168. Basic and acidic residues predominate over residues valine 206 to proline 217. A helical transmembrane segment spans residues isoleucine 245–tyrosine 265. Topologically, residues leucine 266–serine 296 are cytoplasmic. Serine 284 carries the phosphoserine modification.

Belongs to the PARM family. In terms of processing, highly N-glycosylated and O-glycosylated. As to expression, expressed in prostate. Detected in other organs at low levels, these include the heart and various tissues of the urogenital tract. Not detected in mammary gland.

It localises to the cell membrane. The protein localises to the golgi apparatus membrane. It is found in the endosome membrane. May regulate TLP1 expression and telomerase activity, thus enabling certain prostatic cells to resist apoptosis. The protein is Prostate androgen-regulated mucin-like protein 1 homolog (Parm1) of Rattus norvegicus (Rat).